The primary structure comprises 184 residues: Large ribosomal subunit protein uL5 (184 aa).

This sequence belongs to the universal ribosomal protein uL5 family. As to quaternary structure, part of the 50S ribosomal subunit; part of the 5S rRNA/L5/L18/L25 subcomplex. Contacts the 5S rRNA and the P site tRNA. Forms a bridge to the 30S subunit in the 70S ribosome.

Its function is as follows. This is one of the proteins that bind and probably mediate the attachment of the 5S RNA into the large ribosomal subunit, where it forms part of the central protuberance. In the 70S ribosome it contacts protein S13 of the 30S subunit (bridge B1b), connecting the 2 subunits; this bridge is implicated in subunit movement. Contacts the P site tRNA; the 5S rRNA and some of its associated proteins might help stabilize positioning of ribosome-bound tRNAs. The polypeptide is Large ribosomal subunit protein uL5 (Corynebacterium kroppenstedtii (strain DSM 44385 / JCM 11950 / CIP 105744 / CCUG 35717)).